A 1422-amino-acid polypeptide reads, in one-letter code: Cardiac-enriched FHL2-interacting protein (1422 aa).

The tract at residues 1 to 23 (MQGNKKCADGFSDTSSIGSVLDE) is disordered. Position 119 is a phosphothreonine (Thr-119). 9 disordered regions span residues 151-177 (RTEA…KFAH), 199-265 (AGVS…GRGK), 279-443 (SAFE…SSPF), 459-500 (LETS…KAPS), 516-718 (YSPL…SDSQ), 731-850 (FSTS…TNKH), 877-1127 (VSSE…HLER), 1142-1244 (TGAA…GWEP), and 1353-1422 (RQGS…EGVS). Positions 201 to 210 (VSSTHQSSHQ) are enriched in polar residues. Composition is skewed to basic and acidic residues over residues 284-298 (WDAH…KDIT) and 305-315 (KAPKHYEDMPL). Ser-327 carries the post-translational modification Phosphoserine. The span at 342-351 (SPSGIQSTSG) shows a compositional bias: polar residues. The segment covering 395–405 (GPHDASEDKKQ) has biased composition (basic and acidic residues). Residues 461–470 (TSDTQPVETS) are compositionally biased toward polar residues. Ser-472 is subject to Phosphoserine. Basic and acidic residues-rich tracts occupy residues 481–495 (QEKE…DSYK), 524–537 (GFDE…DGKQ), and 579–588 (PAMDSRESFA). Residues 590–606 (SHPTFSSPSASSKTHFS) show a composition bias toward low complexity. Basic and acidic residues-rich tracts occupy residues 611–622 (AAERNSHEKEEA), 635–644 (WHPDSRENLP), and 653–675 (CNRD…EKRL). The segment covering 731–744 (FSTSSSDQSFASFE) has biased composition (low complexity). The span at 790-801 (GVEEHRQKETQR) shows a compositional bias: basic and acidic residues. Ser-815 is subject to Phosphoserine. The span at 828 to 839 (ADKDTALSHAKD) shows a compositional bias: basic and acidic residues. Polar residues-rich tracts occupy residues 907 to 926 (SESQ…STEQ) and 944 to 954 (QDETSQQTRKG). A compositionally biased stretch (basic and acidic residues) spans 975–991 (ADERLAHEKSRSADSGK). The span at 1048–1067 (AATSPNPSSLGGSSTCSPAA) shows a compositional bias: polar residues. Residues 1087 to 1099 (PPGPGPWASPGPS) show a composition bias toward pro residues. Positions 1173–1184 (RRAKKLASKRRK) are enriched in basic residues. Residues 1185-1202 (SDQMSEKHTEAWEGKSFT) are compositionally biased toward basic and acidic residues. The segment covering 1353–1366 (RQGSSHRPQSSQGA) has biased composition (polar residues). Residues 1411-1422 (DDLEDFATEGVS) show a composition bias toward acidic residues.

As to quaternary structure, interacts with FHL2.

It is found in the cytoplasm. It localises to the myofibril. Its subcellular location is the sarcomere. The protein resides in the z line. Its function is as follows. Plays an important role in cardiomyocyte hypertrophy via activation of the calcineurin/NFAT signaling pathway. The chain is Cardiac-enriched FHL2-interacting protein from Rattus norvegicus (Rat).